Here is a 521-residue protein sequence, read N- to C-terminus: MEFPEHSRHLLQCLSEQRHQGFLCDCTVLVGDAHFRAHRAVLASCSMYFHLFYKDQLDKRDIVHLNSDIVTAPAFALLLEFMYEGKLQFKDLPIEDVLAAASYLHMYDIVKVCKKKLKEKATTEADSTKKEEDASSCSDKIECLSDGSSHMAGDLPSDEDDVEEEKINILPGKTDLATESGNMWIRLPSDSASIPQTGGEAETHTAAAGKTADSPCSSTGSLSHRSATSMRDSADVDCVLDLSVKSSLSGAETLNNSYLSSQEILRNSLVQVKVEKEASCDENDIDTTEYDIERNTVKESSSSNIRAPYEPVHLAPIREDSVLRELDHDDKASDDDITPENERVQMETNMDSSLLPYVPNILSPAGQIFMCPLCNKVFPSPHILQIHLSTHFREQEGIRSKPANDVHVPTCSLCGKTFSCMYTLKRHERTHSGEKPFTCTQCGKSFQYSHNLSRHAVVHTREKPHACKWCERRFTQSGDLYRHIRKFHCELVNSLSVKSETLGLPAVRDWTLEDSSQELWK.

The region spanning 24–91 (CDCTVLVGDA…MYEGKLQFKD (68 aa)) is the BTB domain. A disordered region spans residues 190–230 (DSASIPQTGGEAETHTAAAGKTADSPCSSTGSLSHRSATSM). Over residues 197–212 (TGGEAETHTAAAGKTA) the composition is skewed to low complexity. A compositionally biased stretch (polar residues) spans 214–230 (SPCSSTGSLSHRSATSM). 4 C2H2-type zinc fingers span residues 369–391 (FMCPLCNKVFPSPHILQIHLSTH), 409–431 (PTCSLCGKTFSCMYTLKRHERTH), 437–459 (FTCTQCGKSFQYSHNLSRHAVVH), and 465–488 (HACKWCERRFTQSGDLYRHIRKFH).

The protein belongs to the krueppel C2H2-type zinc-finger protein family. ZBTB18 subfamily.

It is found in the nucleus. Transcriptional repressor that plays a role in various developmental processes. Specifically binds the consensus DNA sequence 5'-[AC]ACATCTG[GT][AC]-3' which contains the E box core, and acts by recruiting chromatin remodeling multiprotein complexes. The protein is Zinc finger and BTB domain-containing protein 18 (zbtb18) of Xenopus tropicalis (Western clawed frog).